A 442-amino-acid chain; its full sequence is Protein translocase subunit SecY (442 aa).

The next 10 membrane-spanning stretches (helical) occupy residues 24–44 (FLFL…PGIN), 76–96 (IFAL…LMTA), 125–145 (VLAL…GVAF), 149–169 (FGFY…MMWL), 178–198 (VGNG…PRAI), 212–232 (IFAL…VVFI), 269–289 (VIPA…GSWF), 312–332 (NILL…ALMF), 363–383 (GVLT…CLLP), and 385–405 (FLVV…LIVV).

This sequence belongs to the SecY/SEC61-alpha family. In terms of assembly, component of the Sec protein translocase complex. Heterotrimer consisting of SecY, SecE and SecG subunits. The heterotrimers can form oligomers, although 1 heterotrimer is thought to be able to translocate proteins. Interacts with the ribosome. Interacts with SecDF, and other proteins may be involved. Interacts with SecA.

The protein localises to the cell inner membrane. Its function is as follows. The central subunit of the protein translocation channel SecYEG. Consists of two halves formed by TMs 1-5 and 6-10. These two domains form a lateral gate at the front which open onto the bilayer between TMs 2 and 7, and are clamped together by SecE at the back. The channel is closed by both a pore ring composed of hydrophobic SecY resides and a short helix (helix 2A) on the extracellular side of the membrane which forms a plug. The plug probably moves laterally to allow the channel to open. The ring and the pore may move independently. The protein is Protein translocase subunit SecY of Pseudomonas aeruginosa (strain ATCC 15692 / DSM 22644 / CIP 104116 / JCM 14847 / LMG 12228 / 1C / PRS 101 / PAO1).